Reading from the N-terminus, the 716-residue chain is Protein C-mannosyl-transferase DPY19L3 (716 aa).

Over 1–43 (MMSIRQRREIRATEVSEDFPAQEENVKLENKLPSGCTSRRLWK) the chain is Cytoplasmic. The chain crosses the membrane as a helical span at residues 44 to 64 (ILSLTIGGTIALCIGLLTSVY). The Lumenal portion of the chain corresponds to 65-154 (LATLHENDLW…RVLPVQKYLE (90 aa)). Residue N118 is glycosylated (N-linked (GlcNAc...) asparagine). Residues 155-182 (PVYFYIYTLFGLQAIYVTALYITSWLLS) traverse the membrane as a helical segment. Over 183–184 (GT) the chain is Cytoplasmic. An intramembrane region (name=3) is located at residues 185–197 (WLSGLLAAFWYVT). Over 198–215 (NRIDTTRVEFTIPLRENW) the chain is Cytoplasmic. The segment at residues 216–230 (ALPFFAIQIAAITYF) is an intramembrane region (name=4). Residues 231–239 (LRPNLQPLS) are Cytoplasmic-facing. The helical transmembrane segment at 240–256 (ERLTLLAIFISTFLFSL) threads the bilayer. Over 257-262 (TWQFNQ) the chain is Lumenal. Residues 263–279 (FMMLMQALVLFTLDSLD) traverse the membrane as a helical segment. The Cytoplasmic portion of the chain corresponds to 280-289 (MLPAVKATWL). Residues 290–306 (YGIQITSLLLVCILQFF) form a helical membrane-spanning segment. At 307–308 (NS) the chain is on the lumenal side. Residues 309 to 323 (MILGSLLISFNLSVF) traverse the membrane as a helical segment. Topologically, residues 324–338 (IARKLQKNLKTGSFL) are cytoplasmic. The helical transmembrane segment at 339–359 (NRLGKLLLHLFMVLCLTLFLN) threads the bilayer. Topologically, residues 360 to 414 (NIIKKILNLKSDEHIFKFLKAKFGLGATRDFDANLYLCEEAFGLLPFNTFGRLSD) are lumenal. A helical membrane pass occupies residues 415-437 (TLLFYAYIFVLSITVIVAFVVAF). Residues 438–465 (HNLSDSTNQQSVGKMEKGTVDLKPETAY) are Cytoplasmic-facing. The helical transmembrane segment at 466-485 (NLIHTILFGFLALSTMRMKY) threads the bilayer. Topologically, residues 486 to 487 (LW) are lumenal. The chain crosses the membrane as a helical span at residues 488 to 499 (TSHMCVFASFGL). The Cytoplasmic portion of the chain corresponds to 500-522 (CSPEIWELLLKSVHLYNPKRICI). The helical transmembrane segment at 523-539 (MRYSVPILILLYLCYKF) threads the bilayer. The Lumenal segment spans residues 540–716 (WPGMMDELSE…FHVYKLSRNK (177 aa)). N704 carries N-linked (GlcNAc...) asparagine glycosylation.

The protein belongs to the dpy-19 family.

It is found in the endoplasmic reticulum membrane. It catalyses the reaction L-tryptophyl-[protein] + a di-trans,poly-cis-dolichyl beta-D-mannosyl phosphate = C-alpha-D-mannosyl-L-tryptophyl-[protein] + a di-trans,poly-cis-dolichyl phosphate + H(+). It participates in protein modification; protein glycosylation. C-mannosyltransferase that mediates C-mannosylation of tryptophan residues on target proteins. The reaction occurs on the luminal side of the endoplasmic reticulum and involves the transfer of a mannose unit from a dolichylphosphate mannose (Dol-P-Man) donor to an acceptor protein containing a WxxW or WxxC consensus sequence. C-mannosylates RSPO1, a Wnt signaling regulator, preferentially at the first Trp residue in the sequence WxxW. C-mannosylates the netrin receptor UNC5A, preferentially at the third tryptophan of WxxWxxWxxC sequence. This Pongo abelii (Sumatran orangutan) protein is Protein C-mannosyl-transferase DPY19L3 (DPY19L3).